The following is a 305-amino-acid chain: P2Y purinoceptor 14 (305 aa).

Topologically, residues 1 to 29 (MDNTTTTEPPKQPCTRNTLITQQIIPMLY) are extracellular. A glycan (N-linked (GlcNAc...) asparagine) is linked at Asn3. A helical membrane pass occupies residues 30–50 (CVVFITGVLLNGISGWIFFYV). Over 51–55 (PSSKS) the chain is Cytoplasmic. The chain crosses the membrane as a helical span at residues 56–76 (FIIYLKNIVVADFLMGLTFPF). Residues 77–96 (KVLSDSGLGPWQLNVFVFRV) lie on the Extracellular side of the membrane. The chain crosses the membrane as a helical span at residues 97-117 (SAVIFYVNMYVSIAFFGLISF). At 118-139 (DRYYKIVKPLLVSIVQSVNYSK) the chain is on the cytoplasmic side. A helical membrane pass occupies residues 140–160 (VLSVLVWVLMLLLAVPNIILT). Asn161 carries N-linked (GlcNAc...) asparagine glycosylation. Residues 161 to 188 (NQSVKDVTNIQCMELKNELGRKWHKASN) lie on the Extracellular side of the membrane. The chain crosses the membrane as a helical span at residues 189–209 (YVFVSIFWIVFLLLTVFYMAI). The Cytoplasmic segment spans residues 210-234 (TRKIFKSHLKSRKNSISVKRKSSRN). A helical transmembrane segment spans residues 235–255 (IFSIVLAFVACFAPYHVARIP). Topologically, residues 256-278 (YTKSQTEGHYSCQAKETLLYTKE) are extracellular. Residues 279–299 (FTLLLSAANVCLDPISISSYA) traverse the membrane as a helical segment. At 300 to 305 (SRLEKS) the chain is on the cytoplasmic side.

This sequence belongs to the G-protein coupled receptor 1 family.

It is found in the cell membrane. Functionally, receptor for UDP-glucose coupled to G-proteins. This chain is P2Y purinoceptor 14 (P2ry14), found in Rattus norvegicus (Rat).